Here is an 855-residue protein sequence, read N- to C-terminus: Suppressor of tumorigenicity 14 protein homolog (855 aa).

The Cytoplasmic portion of the chain corresponds to 1–55 (MGSNRGRKAGGGSQDFGAGLKYNSRLENMNGFEEGVEFLPANNAKKVEKRGPRRW). Serine 13 is subject to Phosphoserine. Residues 56-76 (VVLVAVLFSFLLLSLMAGLLV) form a helical; Signal-anchor for type II membrane protein membrane-spanning segment. Over 77-855 (WHFHYRNVRV…RDWIKEHTGV (779 aa)) the chain is Extracellular. In terms of domain architecture, SEA spans 86–203 (VQKVFNGHLR…TSVVAFPIDP (118 aa)). Asparagine 107 carries N-linked (GlcNAc...) asparagine glycosylation. A disulfide bond links cysteine 214 and cysteine 244. CUB domains follow at residues 214–331 (CSFA…EATF) and 340–444 (CGGF…LAEY). Residues asparagine 302 and asparagine 365 are each glycosylated (N-linked (GlcNAc...) asparagine). 2 cysteine pairs are disulfide-bonded: cysteine 340/cysteine 366 and cysteine 397/cysteine 410. Residue asparagine 421 is glycosylated (N-linked (GlcNAc...) asparagine). 4 consecutive LDL-receptor class A domains span residues 451–488 (DPCP…YCRC), 489–522 (NATH…DEEG), 523–561 (CSCP…SCDS), and 565–604 (VSCT…NCDC). Disulfide bonds link cysteine 453/cysteine 464, cysteine 459/cysteine 477, cysteine 471/cysteine 486, cysteine 488/cysteine 501, cysteine 496/cysteine 514, cysteine 508/cysteine 523, cysteine 525/cysteine 537, cysteine 532/cysteine 550, cysteine 544/cysteine 559, cysteine 567/cysteine 579, cysteine 574/cysteine 593, cysteine 587/cysteine 602, and cysteine 641/cysteine 657. Residue asparagine 489 is glycosylated (N-linked (GlcNAc...) asparagine). Positions 615-854 (VVGGTNADEG…VRDWIKEHTG (240 aa)) constitute a Peptidase S1 domain. Residues histidine 656 and aspartate 711 each act as charge relay system in the active site. The N-linked (GlcNAc...) asparagine glycan is linked to asparagine 772. 2 disulfide bridges follow: cysteine 776/cysteine 790 and cysteine 801/cysteine 830. The active-site Charge relay system is the serine 805.

Belongs to the peptidase S1 family. As to quaternary structure, interacts with CDCP1. May interact with TMEFF1. As to expression, highly expressed in intestine, kidney, lung, and thymus. Not expressed in skeletal muscle, liver, heart, testis and brain.

The protein localises to the membrane. The catalysed reaction is Cleaves various synthetic substrates with Arg or Lys at the P1 position and prefers small side-chain amino acids, such as Ala and Gly, at the P2 position.. Exhibits trypsin-like activity as defined by cleavage of synthetic substrates with Arg or Lys as the P1 site. Involved in the terminal differentiation of keratinocytes through prostasin (PRSS8) activation and filaggrin (FLG) processing. Proteolytically cleaves and therefore activates TMPRSS13. The sequence is that of Suppressor of tumorigenicity 14 protein homolog (St14) from Mus musculus (Mouse).